Here is a 147-residue protein sequence, read N- to C-terminus: UPF0306 protein YhbP (147 aa).

This sequence belongs to the UPF0306 family.

This is UPF0306 protein YhbP from Escherichia coli O157:H7.